A 349-amino-acid chain; its full sequence is Transmembrane protein 59-like (349 aa).

The N-terminal stretch at 1–22 (MDSVALMPLLLLLLLQPPPATP) is a signal peptide. The N-linked (GlcNAc...) asparagine glycan is linked to Asn-100. The helical transmembrane segment at 276 to 296 (ILACCLFLSVLVMLWLSCSTL) threads the bilayer. Residues 347–349 (TKL) carry the Microbody targeting signal motif.

This sequence belongs to the TMEM59 family.

Its subcellular location is the golgi apparatus membrane. In terms of biological role, modulates the O-glycosylation and complex N-glycosylation steps occurring during the Golgi maturation of APP. Inhibits APP transport to the cell surface and further shedding. The chain is Transmembrane protein 59-like (TMEM59L) from Bos taurus (Bovine).